Reading from the N-terminus, the 686-residue chain is Band 4.1-like protein 4A (686 aa).

Residues 11 to 299 (FYCEVLLLDE…EHHTFFRMPE (289 aa)) form the FERM domain. The residue at position 304 (Ser-304) is a Phosphoserine. The disordered stretch occupies residues 331 to 686 (RDLSIQLPRP…IQASRLKTET (356 aa)). Positions 357-376 (AQTQPAESNSISRITANMEN) are enriched in polar residues. Phosphoserine is present on residues Ser-389, Ser-393, and Ser-402. The segment covering 418-428 (GPQSGLYNSPS) has biased composition (polar residues). Residues 479 to 489 (RCNTSSGSESE) show a composition bias toward low complexity. Basic and acidic residues-rich tracts occupy residues 518 to 527 (VLRRQKEKNQ) and 547 to 561 (QAKEELWKHIQKELV). The segment covering 588 to 601 (IRHSHSPRSYRQYR) has biased composition (basic residues). A compositionally biased stretch (basic and acidic residues) spans 648-658 (GSKDSLMEEKP). The segment covering 673-686 (TIKTIQASRLKTET) has biased composition (polar residues).

As to expression, expressed in many tissues. High levels of expression in brain, liver, thymus and peripheral blood leukocytes and low levels of expression in heart, kidney, testis and colon.

The protein localises to the cytoplasm. Its subcellular location is the cytoskeleton. The chain is Band 4.1-like protein 4A from Homo sapiens (Human).